We begin with the raw amino-acid sequence, 426 residues long: Serine hydroxymethyltransferase (426 aa).

(6S)-5,6,7,8-tetrahydrofolate contacts are provided by residues L122 and 126–128 (GHL). K231 is subject to N6-(pyridoxal phosphate)lysine. Residues E247 and 355 to 357 (SPF) each bind (6S)-5,6,7,8-tetrahydrofolate.

It belongs to the SHMT family. In terms of assembly, homodimer. It depends on pyridoxal 5'-phosphate as a cofactor.

The protein localises to the cytoplasm. It carries out the reaction (6R)-5,10-methylene-5,6,7,8-tetrahydrofolate + glycine + H2O = (6S)-5,6,7,8-tetrahydrofolate + L-serine. The protein operates within one-carbon metabolism; tetrahydrofolate interconversion. It participates in amino-acid biosynthesis; glycine biosynthesis; glycine from L-serine: step 1/1. Catalyzes the reversible interconversion of serine and glycine with tetrahydrofolate (THF) serving as the one-carbon carrier. This reaction serves as the major source of one-carbon groups required for the biosynthesis of purines, thymidylate, methionine, and other important biomolecules. Also exhibits THF-independent aldolase activity toward beta-hydroxyamino acids, producing glycine and aldehydes, via a retro-aldol mechanism. The chain is Serine hydroxymethyltransferase from Cyanothece sp. (strain PCC 7425 / ATCC 29141).